The following is a 433-amino-acid chain: Glutamate-1-semialdehyde 2,1-aminomutase (433 aa).

N6-(pyridoxal phosphate)lysine is present on lysine 272.

The protein belongs to the class-III pyridoxal-phosphate-dependent aminotransferase family. HemL subfamily. As to quaternary structure, homodimer. Requires pyridoxal 5'-phosphate as cofactor.

It is found in the cytoplasm. The enzyme catalyses (S)-4-amino-5-oxopentanoate = 5-aminolevulinate. It participates in porphyrin-containing compound metabolism; protoporphyrin-IX biosynthesis; 5-aminolevulinate from L-glutamyl-tRNA(Glu): step 2/2. In Methylacidiphilum infernorum (isolate V4) (Methylokorus infernorum (strain V4)), this protein is Glutamate-1-semialdehyde 2,1-aminomutase.